An 850-amino-acid chain; its full sequence is Rho guanine nucleotide exchange factor 33 (850 aa).

2 stretches are compositionally biased toward basic and acidic residues: residues 1-13 (MEKS…ENEH) and 98-113 (EEMQ…EKRR). 2 disordered regions span residues 1 to 21 (MEKS…NPST) and 98 to 209 (EEMQ…DENL). A coiled-coil region spans residues 54 to 128 (LEEKVKSCRC…KAKKAQKEEH (75 aa)). The span at 130 to 149 (AQAGPASAPAPGSAPTQGSP) shows a compositional bias: low complexity. A compositionally biased stretch (polar residues) spans 164–175 (DFTNMLPSQNYE). A DH domain is found at 273–448 (KRQTVALELL…RVFISHYTLL (176 aa)). Disordered regions lie at residues 504 to 550 (EMLQ…WELE) and 702 to 850 (AAQA…WGWW). Composition is skewed to low complexity over residues 510 to 520 (PSSSSSAPAVS) and 754 to 770 (APHG…GAPR). R766 is modified (omega-N-methylarginine). The span at 773–783 (FPQQRSQSEKQ) shows a compositional bias: polar residues. The span at 784-806 (TYLEEMHLEDATRFCPKEERESE) shows a compositional bias: basic and acidic residues. The segment covering 826-835 (SFRKLFKKKN) has biased composition (basic residues).

This is Rho guanine nucleotide exchange factor 33 (Arhgef33) from Mus musculus (Mouse).